The chain runs to 97 residues: Co-chaperonin GroES (97 aa).

Belongs to the GroES chaperonin family. Heptamer of 7 subunits arranged in a ring. Interacts with the chaperonin GroEL.

The protein resides in the cytoplasm. Its function is as follows. Together with the chaperonin GroEL, plays an essential role in assisting protein folding. The GroEL-GroES system forms a nano-cage that allows encapsulation of the non-native substrate proteins and provides a physical environment optimized to promote and accelerate protein folding. GroES binds to the apical surface of the GroEL ring, thereby capping the opening of the GroEL channel. This is Co-chaperonin GroES from Elusimicrobium minutum (strain Pei191).